The chain runs to 702 residues: Phosphoglycerol transferase I (702 aa).

A run of 3 helical transmembrane segments spans residues 2–22 (HWIL…SPRL), 71–91 (FSGY…PLML), and 103–123 (GGAV…VSPV).

The protein belongs to the OpgB family.

The protein localises to the cell inner membrane. It catalyses the reaction a phosphatidylglycerol + a membrane-derived-oligosaccharide D-glucose = a 1,2-diacyl-sn-glycerol + a membrane-derived-oligosaccharide 6-(glycerophospho)-D-glucose.. It functions in the pathway glycan metabolism; osmoregulated periplasmic glucan (OPG) biosynthesis. In terms of biological role, transfers a phosphoglycerol residue from phosphatidylglycerol to the membrane-bound nascent glucan backbones. In Xanthomonas campestris pv. campestris (strain B100), this protein is Phosphoglycerol transferase I.